The sequence spans 658 residues: Probable replication factor A 73 kDa subunit (658 aa).

Disordered stretches follow at residues 134 to 155 (PEVK…RPNI) and 169 to 222 (SEFQ…TERG). Residues 236 to 326 (FRIHGMVSRK…TLRNDSVVEA (91 aa)) constitute a DNA-binding region (OB). The C4-type zinc-finger motif lies at 518–539 (CASEGCQKKVIESDGEYRCEKC).

The protein belongs to the replication factor A protein 1 family. In terms of assembly, component of the heterotrimeric canonical replication protein A complex (RPA).

The protein resides in the nucleus. Functionally, as part of the heterotrimeric replication protein A complex (RPA/RP-A), binds and stabilizes single-stranded DNA intermediates, that form during DNA replication or upon DNA stress. It prevents their reannealing and in parallel, recruits and activates different proteins and complexes involved in DNA metabolism. Thereby, it plays an essential role both in DNA replication and the cellular response to DNA damage. The sequence is that of Probable replication factor A 73 kDa subunit from Caenorhabditis briggsae.